A 463-amino-acid polypeptide reads, in one-letter code: Glutamate--tRNA ligase 1 (463 aa).

The short motif at 10–20 (PSPTGYLHIGG) is the 'HIGH' region element. Residues 238-242 (KLSKR) carry the 'KMSKS' region motif. Lys-241 contributes to the ATP binding site.

The protein belongs to the class-I aminoacyl-tRNA synthetase family. Glutamate--tRNA ligase type 1 subfamily. As to quaternary structure, monomer.

It is found in the cytoplasm. The enzyme catalyses tRNA(Glu) + L-glutamate + ATP = L-glutamyl-tRNA(Glu) + AMP + diphosphate. In terms of biological role, catalyzes the attachment of glutamate to tRNA(Glu) in a two-step reaction: glutamate is first activated by ATP to form Glu-AMP and then transferred to the acceptor end of tRNA(Glu). This Helicobacter pylori (strain ATCC 700392 / 26695) (Campylobacter pylori) protein is Glutamate--tRNA ligase 1.